The primary structure comprises 5125 residues: Usherin (5125 aa).

A signal peptide spans 1–33 (MYYLALSSGFLGQAIKTSILAYLASVLLAASQG). N-linked (GlcNAc...) asparagine glycans are attached at residues Asn120, Asn229, Asn257, Asn273, Asn414, Asn447, and Asn468. Residues 273 to 513 (NVSLTNREIL…AVDEITIIGR (241 aa)) enclose the Laminin N-terminal domain. 39 cysteine pairs are disulfide-bonded: Cys514-Cys523, Cys516-Cys532, Cys534-Cys545, Cys548-Cys568, Cys571-Cys580, Cys573-Cys601, Cys604-Cys613, Cys616-Cys634, Cys637-Cys651, Cys639-Cys658, Cys660-Cys669, Cys672-Cys687, Cys690-Cys704, Cys692-Cys711, Cys713-Cys722, Cys725-Cys740, Cys743-Cys755, Cys745-Cys762, Cys764-Cys773, Cys776-Cys788, Cys791-Cys804, Cys793-Cys811, Cys813-Cys822, Cys825-Cys840, Cys843-Cys857, Cys845-Cys864, Cys866-Cys875, Cys878-Cys893, Cys896-Cys909, Cys898-Cys916, Cys918-Cys927, Cys930-Cys944, Cys947-Cys959, Cys949-Cys966, Cys981-Cys995, Cys998-Cys1010, Cys1000-Cys1017, Cys1019-Cys1028, and Cys1031-Cys1046. Laminin EGF-like domains are found at residues 514 to 570 (CQCH…NCKP), 571 to 636 (CQCH…VCKH), 637 to 689 (CDCN…CCRP), 690 to 742 (CDCN…GCEP), 743 to 790 (CHCN…ACEV), 791 to 842 (CDCN…LCLP), 843 to 895 (CNCE…GCQA), 896 to 946 (CDCD…GCLP), 947 to 997 (CLCH…RCRP), and 998 to 1048 (CHCH…ACSK). N-linked (GlcNAc...) asparagine glycosylation is present at Asn646. Residues Asn835 and Asn852 are each glycosylated (N-linked (GlcNAc...) asparagine). Asn884 carries an N-linked (GlcNAc...) asparagine glycan. Asn940 carries N-linked (GlcNAc...) asparagine glycosylation. Residue Asn1007 is glycosylated (N-linked (GlcNAc...) asparagine). 4 consecutive Fibronectin type-III domains span residues 1054-1142 (PPPR…TKPE), 1146-1240 (GHLN…APPQ), 1241-1356 (RQEP…SAPV), and 1357-1461 (FMAA…AAPA). 6 N-linked (GlcNAc...) asparagine glycosylation sites follow: Asn1067, Asn1149, Asn1170, Asn1221, Asn1304, and Asn1381. 2 consecutive Laminin G-like domains span residues 1510-1697 (TKGT…WEGC) and 1702-1879 (EEGV…QDGC). Cystine bridges form between Cys1660-Cys1697 and Cys1850-Cys1879. 29 consecutive Fibronectin type-III domains span residues 1857–1943 (TRGA…SAPH), 1945–2042 (VPTP…TPQE), 2043–2132 (APQE…LPPE), 2133–2230 (RVDP…TVPE), 2231–2318 (GVPA…APPE), 2319–2421 (GTVN…MPPG), 2425–2519 (GLLS…TTED), 2520–2613 (KPGP…TPEG), 2614–2709 (IPGP…TRPS), 2713–2806 (GVQP…THPA), 2807–2910 (LPQE…TLAG), 2914–3005 (RGAT…TWEE), 3009–3099 (GMRP…TPSG), 3380–3485 (ATEE…TRED), 3486–3577 (VPQG…TRGV), 3580–3670 (SVPP…AAPQ), 3672–3762 (VWVT…TPED), 3765–3852 (PPCN…TLEA), 3853–3950 (APVG…TLEA), 3951–4054 (PPQD…SAPS), 4055–4143 (GLMN…APPD), 4144–4251 (SQMA…APPD), 4252–4344 (GLSP…ASPA), 4345–4432 (GVSP…APPE), 4433–4517 (DMDP…TSPS), 4518–4620 (APSG…IPPL), 4625–4720 (PHLE…TGPA), 4721–4813 (PPEG…THPA), and 4814–4916 (PPSG…TKKE). The segment at 1930–1950 (SDWSRGRTLGSAPHSVPTPSR) is disordered.

As to quaternary structure, interacts with collagen IV and fibronectin via its laminin EGF-like domains. Interaction with collagen may be required for stable integration into the basement membrane. Interacts with NINL. Interacts with USH1C. Interacts (via the cytoplasmic region) with PDZD7. Component of USH2 complex, composed of ADGRV1, PDZD7, USH2A and WHRN. Interacts with ADGRV1/MASS1 (via N-terminal PDZ domain). Interacts (via the cytoplasmic region) with WHRN. Interacts (via the cytoplasmic region) with VEZT and MYO7A (via MyTH4-FERM domains); the interaction associates VEZT with the USH2 complex at the stereocilia base. As to expression, present in the synaptic terminals of inner ear hair cells (at protein level). Predominantly expressed in the retina and cochlea. Weakly expressed in brain and kidney. Detectable from E17 in the neural epithelium, but not in the retinal pigment epithelium (RPE) of the developing retina. After birth, it is expressed at P7 and remains expressed during adulthood.

It is found in the secreted. The protein resides in the cell projection. Its subcellular location is the stereocilium membrane. It localises to the photoreceptor inner segment. Functionally, involved in hearing and vision as member of the USH2 complex. In the inner ear, required for the hair bundle ankle formation, which connects growing stereocilia in developing cochlear hair cells. In retina photoreceptors, the USH2 complex is required for the maintenance of periciliary membrane complex that seems to play a role in regulating intracellular protein transport. The sequence is that of Usherin (Ush2a) from Rattus norvegicus (Rat).